The sequence spans 196 residues: Orotate phosphoribosyltransferase (196 aa).

Residue 117–125 (EDVVTTGLS) coordinates 5-phospho-alpha-D-ribose 1-diphosphate. Positions 121 and 149 each coordinate orotate.

Belongs to the purine/pyrimidine phosphoribosyltransferase family. PyrE subfamily. As to quaternary structure, homodimer. The cofactor is Mg(2+).

It carries out the reaction orotidine 5'-phosphate + diphosphate = orotate + 5-phospho-alpha-D-ribose 1-diphosphate. Its pathway is pyrimidine metabolism; UMP biosynthesis via de novo pathway; UMP from orotate: step 1/2. Its function is as follows. Catalyzes the transfer of a ribosyl phosphate group from 5-phosphoribose 1-diphosphate to orotate, leading to the formation of orotidine monophosphate (OMP). The polypeptide is Orotate phosphoribosyltransferase (Sphingopyxis alaskensis (strain DSM 13593 / LMG 18877 / RB2256) (Sphingomonas alaskensis)).